We begin with the raw amino-acid sequence, 177 residues long: Protein Flattop (177 aa).

The tract at residues 113 to 177 (ILGKPHDPDS…TPGPQRPAKS (65 aa)) is disordered. Over residues 115–124 (GKPHDPDSQK) the composition is skewed to basic and acidic residues. Polar residues predominate over residues 132–163 (TKTVQQARSPTIIPSSPAANLNSPDELQSSHP).

This sequence belongs to the Flattop family. Microtubule inner protein component of sperm flagellar doublet microtubules. Interacts with DLG3. Expressed in airway epithelial cells.

The protein localises to the cytoplasm. The protein resides in the cytoskeleton. Its subcellular location is the cilium basal body. It is found in the cell projection. It localises to the cilium. The protein localises to the apical cell membrane. The protein resides in the cilium axoneme. Its subcellular location is the flagellum axoneme. In terms of biological role, microtubule inner protein (MIP) part of the dynein-decorated doublet microtubules (DMTs) in cilia axoneme. Acts as a regulator of cilium basal body docking and positioning in mono- and multiciliated cells. Regulates basal body docking and cilia formation in multiciliated lung cells. Regulates kinocilium positioning and stereocilia bundle morphogenesis in the inner ear. The sequence is that of Protein Flattop from Homo sapiens (Human).